A 91-amino-acid polypeptide reads, in one-letter code: C-C motif chemokine 5 (91 aa).

The signal sequence occupies residues 1-23 (MKVSAAALCVILTTAALCVPASA). Intrachain disulfides connect cysteine 33–cysteine 57 and cysteine 34–cysteine 73.

This sequence belongs to the intercrine beta (chemokine CC) family.

The protein localises to the secreted. Chemoattractant for blood monocytes, memory T-helper cells and eosinophils. Causes the release of histamine from basophils and activates eosinophils. May activate several chemokine receptors including CCR1, CCR3, CCR4 and CCR5. May also be an agonist of the G protein-coupled receptor GPR75. Together with GPR75, may play a role in neuron survival through activation of a downstream signaling pathway involving the PI3, Akt and MAP kinases. By activating GPR75 may also play a role in insulin secretion by islet cells. The chain is C-C motif chemokine 5 (CCL5) from Cavia porcellus (Guinea pig).